The sequence spans 352 residues: Phenylalanine--tRNA ligase alpha subunit (352 aa).

Position 258 (Glu-258) interacts with Mg(2+).

Belongs to the class-II aminoacyl-tRNA synthetase family. Phe-tRNA synthetase alpha subunit type 1 subfamily. In terms of assembly, tetramer of two alpha and two beta subunits. Mg(2+) serves as cofactor.

Its subcellular location is the cytoplasm. It carries out the reaction tRNA(Phe) + L-phenylalanine + ATP = L-phenylalanyl-tRNA(Phe) + AMP + diphosphate + H(+). The polypeptide is Phenylalanine--tRNA ligase alpha subunit (Staphylococcus haemolyticus (strain JCSC1435)).